The following is a 279-amino-acid chain: Plasmodesmata-located protein 8 (279 aa).

Residues 1 to 20 (MRRLFLFSLLFLFFYSSSSS) form the signal peptide. Residues 21–253 (RSSSESHIFI…PTNGDHVGKS (233 aa)) lie on the Extracellular side of the membrane. Gnk2-homologous domains follow at residues 27–135 (HIFI…TNDF) and 137–237 (GKPD…GSGY). Cystine bridges form between Cys-34–Cys-113, Cys-89–Cys-98, Cys-101–Cys-126, Cys-148–Cys-215, Cys-191–Cys-200, and Cys-203–Cys-228. Residues 254-274 (IAIIVGVIAGFAILVVLLSLC) form a helical membrane-spanning segment. Residues 254 to 274 (IAIIVGVIAGFAILVVLLSLC) are necessary and sufficient for plasmodesmal targeting. Residues 275–279 (RNSMH) are Cytoplasmic-facing.

This sequence belongs to the cysteine-rich repeat secretory protein family. Plasmodesmata-located proteins (PDLD) subfamily. In terms of assembly, interacts with ACBP6; interaction occurs at the plasma membrane. (Microbial infection) Interacts with Grapevine fanleaf virus (GFLV) 2B-MP. Highly expressed in pollen, lateral root and elongation zone. Higher expression in the reproductive tissues (flowers and buds) than in vegetative organs (leaves and stems). High expression in shoot and root phloem companion cells (at protein level).

It is found in the cell membrane. The protein resides in the cell junction. Its subcellular location is the plasmodesma. In terms of biological role, modulates cell-to-cell trafficking. This chain is Plasmodesmata-located protein 8, found in Arabidopsis thaliana (Mouse-ear cress).